The chain runs to 202 residues: Heat shock 22 kDa protein, mitochondrial (202 aa).

The transit peptide at 1 to 31 directs the protein to the mitochondrion; the sequence is MASSLALKRFLSSGLLSSSFLRPVASSASRS. One can recognise a sHSP domain in the interval 94 to 202; sequence VLSAASRRGW…RNNVINVKVD (109 aa).

The protein belongs to the small heat shock protein (HSP20) family.

The protein resides in the mitochondrion. In Pisum sativum (Garden pea), this protein is Heat shock 22 kDa protein, mitochondrial (HSP22).